A 177-amino-acid chain; its full sequence is Peptide deformylase (177 aa).

Positions 98 and 140 each coordinate Fe cation. Residue E141 is part of the active site. H144 serves as a coordination point for Fe cation.

This sequence belongs to the polypeptide deformylase family. Fe(2+) serves as cofactor.

It catalyses the reaction N-terminal N-formyl-L-methionyl-[peptide] + H2O = N-terminal L-methionyl-[peptide] + formate. Its function is as follows. Removes the formyl group from the N-terminal Met of newly synthesized proteins. Requires at least a dipeptide for an efficient rate of reaction. N-terminal L-methionine is a prerequisite for activity but the enzyme has broad specificity at other positions. The protein is Peptide deformylase of Zymomonas mobilis subsp. mobilis (strain ATCC 31821 / ZM4 / CP4).